The following is a 504-amino-acid chain: Maturase K (504 aa).

The protein belongs to the intron maturase 2 family. MatK subfamily.

The protein localises to the plastid. It localises to the chloroplast. In terms of biological role, usually encoded in the trnK tRNA gene intron. Probably assists in splicing its own and other chloroplast group II introns. This chain is Maturase K, found in Olimarabidopsis pumila (Dwarf rocket).